The following is a 214-amino-acid chain: Pyridoxine/pyridoxamine 5'-phosphate oxidase (214 aa).

Substrate contacts are provided by residues 8–11 (RINY) and Lys-66. FMN is bound by residues 61–66 (RIVLIK), 76–77 (FT), Arg-82, Lys-83, and Gln-105. The substrate site is built by Tyr-123, Arg-127, and Ser-131. FMN-binding positions include 140 to 141 (QS) and Trp-184. 190–192 (RLH) provides a ligand contact to substrate. Residue Arg-194 coordinates FMN.

It belongs to the pyridoxamine 5'-phosphate oxidase family. In terms of assembly, homodimer. FMN is required as a cofactor.

The catalysed reaction is pyridoxamine 5'-phosphate + O2 + H2O = pyridoxal 5'-phosphate + H2O2 + NH4(+). It carries out the reaction pyridoxine 5'-phosphate + O2 = pyridoxal 5'-phosphate + H2O2. It participates in cofactor metabolism; pyridoxal 5'-phosphate salvage; pyridoxal 5'-phosphate from pyridoxamine 5'-phosphate: step 1/1. Its pathway is cofactor metabolism; pyridoxal 5'-phosphate salvage; pyridoxal 5'-phosphate from pyridoxine 5'-phosphate: step 1/1. Functionally, catalyzes the oxidation of either pyridoxine 5'-phosphate (PNP) or pyridoxamine 5'-phosphate (PMP) into pyridoxal 5'-phosphate (PLP). The polypeptide is Pyridoxine/pyridoxamine 5'-phosphate oxidase (Burkholderia lata (strain ATCC 17760 / DSM 23089 / LMG 22485 / NCIMB 9086 / R18194 / 383)).